The following is a 265-amino-acid chain: Pyrroline-5-carboxylate reductase (265 aa).

This sequence belongs to the pyrroline-5-carboxylate reductase family.

The protein resides in the cytoplasm. It carries out the reaction L-proline + NADP(+) = (S)-1-pyrroline-5-carboxylate + NADPH + 2 H(+). The enzyme catalyses L-proline + NAD(+) = (S)-1-pyrroline-5-carboxylate + NADH + 2 H(+). It participates in amino-acid biosynthesis; L-proline biosynthesis; L-proline from L-glutamate 5-semialdehyde: step 1/1. Its function is as follows. Catalyzes the reduction of 1-pyrroline-5-carboxylate (PCA) to L-proline. This chain is Pyrroline-5-carboxylate reductase, found in Aquifex aeolicus (strain VF5).